The chain runs to 322 residues: Prephenate dehydratase (322 aa).

Positions 5 to 191 (RIAYLGPEGT…ARTRFVLVGM (187 aa)) constitute a Prephenate dehydratase domain. The 78-residue stretch at 205–282 (SAVLRIDNAP…ADVCYLGSWP (78 aa)) folds into the ACT domain. The disordered stretch occupies residues 286–322 (ATGPTVSPPPPDEASRWLARLRAGKPDQASEPGGGKL).

In terms of assembly, homodimer.

The catalysed reaction is prephenate + H(+) = 3-phenylpyruvate + CO2 + H2O. It participates in amino-acid biosynthesis; L-phenylalanine biosynthesis; phenylpyruvate from prephenate: step 1/1. This Mycobacterium leprae (strain Br4923) protein is Prephenate dehydratase (pheA).